Consider the following 382-residue polypeptide: Mannitol-1-phosphate 5-dehydrogenase (382 aa).

Position 3 to 14 (3 to 14) interacts with NAD(+); that stretch reads AVHFGAGNIGRG.

The protein belongs to the mannitol dehydrogenase family.

The enzyme catalyses D-mannitol 1-phosphate + NAD(+) = beta-D-fructose 6-phosphate + NADH + H(+). The sequence is that of Mannitol-1-phosphate 5-dehydrogenase from Aliivibrio salmonicida (strain LFI1238) (Vibrio salmonicida (strain LFI1238)).